A 185-amino-acid chain; its full sequence is Elongation factor P (185 aa).

It belongs to the elongation factor P family.

Its subcellular location is the cytoplasm. It participates in protein biosynthesis; polypeptide chain elongation. In terms of biological role, involved in peptide bond synthesis. Stimulates efficient translation and peptide-bond synthesis on native or reconstituted 70S ribosomes in vitro. Probably functions indirectly by altering the affinity of the ribosome for aminoacyl-tRNA, thus increasing their reactivity as acceptors for peptidyl transferase. In Nostoc punctiforme (strain ATCC 29133 / PCC 73102), this protein is Elongation factor P.